The primary structure comprises 561 residues: DNA ligase B (561 aa).

The active-site N6-AMP-lysine intermediate is the Lys-125.

This sequence belongs to the NAD-dependent DNA ligase family. LigB subfamily.

The catalysed reaction is NAD(+) + (deoxyribonucleotide)n-3'-hydroxyl + 5'-phospho-(deoxyribonucleotide)m = (deoxyribonucleotide)n+m + AMP + beta-nicotinamide D-nucleotide.. Catalyzes the formation of phosphodiester linkages between 5'-phosphoryl and 3'-hydroxyl groups in double-stranded DNA using NAD as a coenzyme and as the energy source for the reaction. This chain is DNA ligase B, found in Salmonella enteritidis PT4 (strain P125109).